Consider the following 131-residue polypeptide: Superoxide dismutase [Ni] (131 aa).

Positions 1-14 are excised as a propeptide; sequence MLSRLFAPKVKVSA. The Ni(2+) site is built by His-15, Cys-16, and Cys-20.

Belongs to the nickel superoxide dismutase family. As to quaternary structure, homohexamer. The hexameric protein has roughly the shape of a hollow sphere with an outer diameter of 72 Angstroms and a large inner cavity. Requires Ni(2+) as cofactor.

It is found in the cytoplasm. The catalysed reaction is 2 superoxide + 2 H(+) = H2O2 + O2. The polypeptide is Superoxide dismutase [Ni] (sodN) (Streptomyces seoulensis).